A 193-amino-acid chain; its full sequence is Fibrillarin-like rRNA/tRNA 2'-O-methyltransferase (193 aa).

Residues 82 to 83 (TT), 100 to 101 (EF), 125 to 126 (DA), and 145 to 148 (DVAQ) each bind S-adenosyl-L-methionine.

The protein belongs to the methyltransferase superfamily. Fibrillarin family. Interacts with nop5. Component of box C/D small ribonucleoprotein (sRNP) particles that contain rpl7ae, FlpA and nop5, plus a guide RNA.

Its function is as follows. Involved in pre-rRNA and tRNA processing. Utilizes the methyl donor S-adenosyl-L-methionine to catalyze the site-specific 2'-hydroxyl methylation of ribose moieties in rRNA and tRNA. Site specificity is provided by a guide RNA that base pairs with the substrate. Methylation occurs at a characteristic distance from the sequence involved in base pairing with the guide RNA. The chain is Fibrillarin-like rRNA/tRNA 2'-O-methyltransferase from Methanosarcina mazei (Methanosarcina frisia).